Here is a 67-residue protein sequence, read N- to C-terminus: Large ribosomal subunit protein bL35 (67 aa).

This sequence belongs to the bacterial ribosomal protein bL35 family.

The sequence is that of Large ribosomal subunit protein bL35 from Rhizobium johnstonii (strain DSM 114642 / LMG 32736 / 3841) (Rhizobium leguminosarum bv. viciae).